Consider the following 680-residue polypeptide: DNA-directed RNA polymerase subunit beta' (680 aa).

Cys69, Cys71, Cys87, and Cys90 together coordinate Zn(2+). Positions 489, 491, and 493 each coordinate Mg(2+).

Belongs to the RNA polymerase beta' chain family. RpoC1 subfamily. In terms of assembly, in plastids the minimal PEP RNA polymerase catalytic core is composed of four subunits: alpha, beta, beta', and beta''. When a (nuclear-encoded) sigma factor is associated with the core the holoenzyme is formed, which can initiate transcription. Mg(2+) serves as cofactor. It depends on Zn(2+) as a cofactor.

Its subcellular location is the plastid. It localises to the chloroplast. The enzyme catalyses RNA(n) + a ribonucleoside 5'-triphosphate = RNA(n+1) + diphosphate. Its function is as follows. DNA-dependent RNA polymerase catalyzes the transcription of DNA into RNA using the four ribonucleoside triphosphates as substrates. This is DNA-directed RNA polymerase subunit beta' from Draba nemorosa (Woodland whitlowgrass).